We begin with the raw amino-acid sequence, 54 residues long: Hemolytic toxin (54 aa).

The plays an important role in the hemolytic activity stretch occupies residues 3–12 (ALAGTIIAGA). Residues 11 to 30 (GASLGFQILDKVLGELGKVS) form an N-terminal region region.

It belongs to the actinoporin family. Sea anemone subfamily. In terms of assembly, octamer or nonamer in membranes. Monomer in the soluble state.

It is found in the secreted. It localises to the nematocyst. Its subcellular location is the target cell membrane. Its function is as follows. Pore-forming protein that forms cations-selective hydrophilic pores of around 1 nm and causes cytolysis. Pore formation is a multi-step process that involves specific recognition of membrane sphingomyelin (but neither cholesterol nor phosphatidylcholine) using aromatic rich region and adjacent phosphocholine (POC) binding site, firm binding to the membrane (mainly driven by hydrophobic interactions) accompanied by the transfer of the N-terminal region to the lipid-water interface and finally pore formation after oligomerization of monomers. The polypeptide is Hemolytic toxin (Heteractis magnifica (Magnificent sea anemone)).